Reading from the N-terminus, the 291-residue chain is D-alanyl-D-alanine carboxypeptidase (291 aa).

A signal peptide spans 1–29; the sequence is MRLRRAAATVITTGALLAAGTLGATPATA. Ser64 (acyl-ester intermediate) is an active-site residue. The active-site Proton acceptor is the Lys67. Ser125 is an active-site residue. Position 242 (Lys242) interacts with substrate.

It belongs to the peptidase S11 family.

It localises to the secreted. It catalyses the reaction Preferential cleavage: (Ac)2-L-Lys-D-Ala-|-D-Ala. Also transpeptidation of peptidyl-alanyl moieties that are N-acyl substituents of D-alanine.. It participates in cell wall biogenesis; peptidoglycan biosynthesis. Its function is as follows. Removes C-terminal D-alanyl residues from sugar-peptide cell wall precursors. This chain is D-alanyl-D-alanine carboxypeptidase, found in Streptomyces sp. (strain K15).